Here is a 523-residue protein sequence, read N- to C-terminus: Arylsulfatase K (523 aa).

Positions 1–16 (MLRVFVLLIFNVNAYC) are cleaved as a signal peptide. Residues Asp35 and Cys75 each coordinate Ca(2+). Cys75 acts as the Nucleophile in catalysis. Position 75 is a 3-oxoalanine (Cys) (Cys75). Asn103 is a glycosylation site (N-linked (GlcNAc...) asparagine). 2 residues coordinate substrate: Lys123 and His246. Asn257 carries N-linked (GlcNAc...) asparagine glycosylation. The Ca(2+) site is built by Asp308 and His309. Asn405 is a glycosylation site (N-linked (GlcNAc...) asparagine).

Belongs to the sulfatase family. Ca(2+) is required as a cofactor. Post-translationally, the conversion to 3-oxoalanine (also known as C-formylglycine, FGly), of a serine or cysteine residue in prokaryotes and of a cysteine residue in eukaryotes, is critical for catalytic activity.

The protein resides in the secreted. It localises to the lysosome. It carries out the reaction an aryl sulfate + H2O = a phenol + sulfate + H(+). The enzyme catalyses Hydrolysis of the 2-sulfate groups of the 2-O-sulfo-D-glucuronate residues of chondroitin sulfate, heparin and heparitin sulfate.. Its function is as follows. Catalyzes the hydrolysis of pseudosubstrates such as p-nitrocatechol sulfate and p-nitrophenyl sulfate. Catalyzes the hydrolysis of the 2-sulfate groups of the 2-O-sulfo-D-glucuronate residues of chondroitin sulfate, heparin and heparitin sulfate. Acts selectively on 2-sulfoglucuronate and lacks activity against 2-sulfoiduronate. The sequence is that of Arylsulfatase K (arsk) from Danio rerio (Zebrafish).